A 289-amino-acid chain; its full sequence is B- and T-lymphocyte attenuator (289 aa).

Residues 1–30 (MKTLPAMLGTGKLFWVFFLIPYLDIWNIHG) form the signal peptide. In terms of domain architecture, Ig-like V-type spans 31–132 (KESCDVQLYI…LIESHSTTLY (102 aa)). Over 31-157 (KESCDVQLYI…MASRPWLLYR (127 aa)) the chain is Extracellular. 3 disulfide bridges follow: Cys-34/Cys-63, Cys-58/Cys-115, and Cys-72/Cys-79. Residues Asn-75, Asn-94, and Asn-110 are each glycosylated (N-linked (GlcNAc...) asparagine). A helical membrane pass occupies residues 158 to 178 (LLPLGGLPLLITTCFCLFCCL). Topologically, residues 179-289 (RRHQGKQNEL…TEYASICVRS (111 aa)) are cytoplasmic.

In terms of assembly, interacts with tyrosine phosphatases PTPN6/SHP-1 and PTPN11/SHP-2. Interacts with TNFRSF14/HVEM (via cysteine-rich domain 1). Phosphorylated on Tyr residues by TNFRSF14 and by antigen receptors cross-linking, both inducing association with PTPN6 and PTPN11. In terms of processing, N-glycosylated.

The protein localises to the cell membrane. Inhibitory receptor on lymphocytes that negatively regulates antigen receptor signaling via PTPN6/SHP-1 and PTPN11/SHP-2. May interact in cis (on the same cell) or in trans (on other cells) with TNFRSF14. In cis interactions, appears to play an immune regulatory role inhibiting in trans interactions in naive T cells to maintain a resting state. In trans interactions, can predominate during adaptive immune response to provide survival signals to effector T cells. This Homo sapiens (Human) protein is B- and T-lymphocyte attenuator.